The primary structure comprises 513 residues: Cytochrome P450 705A1 (513 aa).

Residues 9 to 29 (QNCFIIILLCSFSLISYFVFF) traverse the membrane as a helical segment. Residue Cys448 coordinates heme.

Belongs to the cytochrome P450 family. Heme is required as a cofactor. As to expression, expressed in root stele, root cortex, root epidermis, root pericycle of the root hair zone, and quiescent center at the root meristematic zone.

The protein resides in the membrane. In terms of biological role, cleaves the arabidiol side chain at C15 to form 14-apo-arabidiol and a side-chain fragment. Involved in the biosynthesis of the volatile homoterpene (E)-4,8-dimethyl-1,3,7-nonatriene (DMNT) in roots. Involved in the production of DMNT by degrading the triterpene arabidiol. May be involved in the defense again the fungal root pathogen Pythium irregulare by producing DMNT. This chain is Cytochrome P450 705A1, found in Arabidopsis thaliana (Mouse-ear cress).